The following is a 72-amino-acid chain: UPF0352 protein HI_0840 (72 aa).

It belongs to the UPF0352 family.

The polypeptide is UPF0352 protein HI_0840 (Haemophilus influenzae (strain ATCC 51907 / DSM 11121 / KW20 / Rd)).